A 204-amino-acid chain; its full sequence is Tat proofreading chaperone DmsD (204 aa).

It belongs to the TorD/DmsD family. DmsD subfamily.

Its function is as follows. Required for biogenesis/assembly of DMSO reductase, but not for the interaction of the DmsA signal peptide with the Tat system. May be part of a chaperone cascade complex that facilitates a folding-maturation pathway for the substrate protein. The protein is Tat proofreading chaperone DmsD of Salmonella typhi.